The sequence spans 150 residues: Deoxyuridine 5'-triphosphate nucleotidohydrolase (150 aa).

Substrate is bound by residues 69 to 71 (RSG), N82, and 86 to 88 (LID).

It belongs to the dUTPase family. It depends on Mg(2+) as a cofactor.

It carries out the reaction dUTP + H2O = dUMP + diphosphate + H(+). It participates in pyrimidine metabolism; dUMP biosynthesis; dUMP from dCTP (dUTP route): step 2/2. In terms of biological role, this enzyme is involved in nucleotide metabolism: it produces dUMP, the immediate precursor of thymidine nucleotides and it decreases the intracellular concentration of dUTP so that uracil cannot be incorporated into DNA. This chain is Deoxyuridine 5'-triphosphate nucleotidohydrolase, found in Chromobacterium violaceum (strain ATCC 12472 / DSM 30191 / JCM 1249 / CCUG 213 / NBRC 12614 / NCIMB 9131 / NCTC 9757 / MK).